The following is a 280-amino-acid chain: Eukaryotic translation initiation factor 3 subunit F-1 (280 aa).

The region spanning 8–138 is the MPN domain; that stretch reads VRVHPVVLFQ…LRAYICIQLG (131 aa).

Belongs to the eIF-3 subunit F family. In terms of assembly, component of the eukaryotic translation initiation factor 3 (eIF-3) complex. The eIF-3 complex interacts with pix.

The protein resides in the cytoplasm. Component of the eukaryotic translation initiation factor 3 (eIF-3) complex, which is involved in protein synthesis of a specialized repertoire of mRNAs and, together with other initiation factors, stimulates binding of mRNA and methionyl-tRNAi to the 40S ribosome. The eIF-3 complex specifically targets and initiates translation of a subset of mRNAs involved in cell proliferation. The protein is Eukaryotic translation initiation factor 3 subunit F-1 of Drosophila mojavensis (Fruit fly).